Reading from the N-terminus, the 179-residue chain is MIFYLHGFDATSPGNHEKMRQLQFIDPDVRLISYSTLHPKHDMQHLLKEVAKQMQYSDDPAPLMVGVGLGAYWAERIGFLNGLKSVLINPNLHPEETMQGKIDRPEEYADIANKCVSEFRLKNTHKAMCILSRVDDVLDSQATAEALKPYYPIEWDEIQPHKFPQLATYLPKIKAFKLG.

This sequence belongs to the UPF0227 family.

The sequence is that of UPF0227 protein Shewmr7_1806 from Shewanella sp. (strain MR-7).